Here is a 764-residue protein sequence, read N- to C-terminus: 1,4-alpha-glucan branching enzyme GlgB (764 aa).

The segment at 1-46 (MSAARQPSPTVRDKAAPEPAAPAAPKGARAPRARRAAPPHGVRPAP) is disordered. Over residues 17–28 (PEPAAPAAPKGA) the composition is skewed to low complexity. D440 acts as the Nucleophile in catalysis. The Proton donor role is filled by E493.

This sequence belongs to the glycosyl hydrolase 13 family. GlgB subfamily. As to quaternary structure, monomer.

The catalysed reaction is Transfers a segment of a (1-&gt;4)-alpha-D-glucan chain to a primary hydroxy group in a similar glucan chain.. It functions in the pathway glycan biosynthesis; glycogen biosynthesis. In terms of biological role, catalyzes the formation of the alpha-1,6-glucosidic linkages in glycogen by scission of a 1,4-alpha-linked oligosaccharide from growing alpha-1,4-glucan chains and the subsequent attachment of the oligosaccharide to the alpha-1,6 position. The protein is 1,4-alpha-glucan branching enzyme GlgB (glgB) of Kitasatospora aureofaciens (Streptomyces aureofaciens).